A 155-amino-acid polypeptide reads, in one-letter code: MLP-like protein 423 (155 aa).

It belongs to the MLP family.

This is MLP-like protein 423 (MLP423) from Arabidopsis thaliana (Mouse-ear cress).